The primary structure comprises 198 residues: Superoxide dismutase [Fe] (198 aa).

His-27, His-74, Asp-157, and His-161 together coordinate Fe(3+).

The protein belongs to the iron/manganese superoxide dismutase family. Homodimer. Requires Fe(3+) as cofactor.

It catalyses the reaction 2 superoxide + 2 H(+) = H2O2 + O2. In terms of biological role, destroys superoxide anion radicals which are normally produced within the cells and which are toxic to biological systems. This is Superoxide dismutase [Fe] (sodB) from Pseudomonas putida (Arthrobacter siderocapsulatus).